The following is a 285-amino-acid chain: Tryptophan synthase alpha chain (285 aa).

Residues glutamate 53 and aspartate 64 each act as proton acceptor in the active site.

This sequence belongs to the TrpA family. As to quaternary structure, tetramer of two alpha and two beta chains.

It carries out the reaction (1S,2R)-1-C-(indol-3-yl)glycerol 3-phosphate + L-serine = D-glyceraldehyde 3-phosphate + L-tryptophan + H2O. Its pathway is amino-acid biosynthesis; L-tryptophan biosynthesis; L-tryptophan from chorismate: step 5/5. Its function is as follows. The alpha subunit is responsible for the aldol cleavage of indoleglycerol phosphate to indole and glyceraldehyde 3-phosphate. This Bordetella pertussis (strain Tohama I / ATCC BAA-589 / NCTC 13251) protein is Tryptophan synthase alpha chain.